The primary structure comprises 407 residues: Protein trichome birefringence-like 12 (407 aa).

A helical; Signal-anchor for type II membrane protein membrane pass occupies residues 21–41 (SLLPRILLLSLLLLLFYSLIL). The GDS motif signature appears at 130–132 (GDS). Residues 379–393 (DCMHWCLPGVPDTWV) carry the DCXHWCLPGXXDXWN motif motif.

The protein belongs to the PC-esterase family. TBL subfamily.

Its subcellular location is the membrane. Its function is as follows. May act as a bridging protein that binds pectin and other cell wall polysaccharides. Probably involved in maintaining esterification of pectins. May be involved in the specific O-acetylation of cell wall polymers. This chain is Protein trichome birefringence-like 12 (TBL12), found in Arabidopsis thaliana (Mouse-ear cress).